A 99-amino-acid chain; its full sequence is Antitoxin VapB47 (99 aa).

This sequence belongs to the phD/YefM antitoxin family.

Functionally, antitoxin component of a type II toxin-antitoxin (TA) system. The polypeptide is Antitoxin VapB47 (vapB47) (Mycobacterium tuberculosis (strain CDC 1551 / Oshkosh)).